Reading from the N-terminus, the 133-residue chain is Small ribosomal subunit protein uS8 (133 aa).

It belongs to the universal ribosomal protein uS8 family. Part of the 30S ribosomal subunit. Contacts proteins S5 and S12.

One of the primary rRNA binding proteins, it binds directly to 16S rRNA central domain where it helps coordinate assembly of the platform of the 30S subunit. The chain is Small ribosomal subunit protein uS8 from Prochlorococcus marinus (strain MIT 9303).